The sequence spans 428 residues: Phosphoribosylamine--glycine ligase (428 aa).

Positions 109–316 (KDFLARHNIP…LVELCLAGTQ (208 aa)) constitute an ATP-grasp domain. 135-196 (VRQKGAPIVI…EEFLDGEEAS (62 aa)) serves as a coordination point for ATP. Residues Glu286 and Asn288 each coordinate Mg(2+).

Belongs to the GARS family. Requires Mg(2+) as cofactor. Mn(2+) is required as a cofactor.

It catalyses the reaction 5-phospho-beta-D-ribosylamine + glycine + ATP = N(1)-(5-phospho-beta-D-ribosyl)glycinamide + ADP + phosphate + H(+). Its pathway is purine metabolism; IMP biosynthesis via de novo pathway; N(1)-(5-phospho-D-ribosyl)glycinamide from 5-phospho-alpha-D-ribose 1-diphosphate: step 2/2. The chain is Phosphoribosylamine--glycine ligase from Yersinia pestis.